The following is a 412-amino-acid chain: B3 domain-containing protein Os02g0683500 (412 aa).

A disordered region spans residues Met1–Ala87. Low complexity predominate over residues Thr30–Pro65. The span at Gly73 to Glu86 shows a compositional bias: gly residues. Positions Phe96–Arg200 form a DNA-binding region, TF-B3. A disordered region spans residues Arg374 to Leu412. Over residues Glu387–Ser399 the composition is skewed to low complexity. The segment covering Ser400 to Leu412 has biased composition (basic and acidic residues).

The protein localises to the nucleus. This chain is B3 domain-containing protein Os02g0683500, found in Oryza sativa subsp. japonica (Rice).